A 206-amino-acid polypeptide reads, in one-letter code: Guanylate kinase (206 aa).

The Guanylate kinase-like domain maps to 13 to 193; it reads PLLLVVSGPS…AVSEIMSIIS (181 aa). 20 to 27 is a binding site for ATP; it reads GPSGVGKD.

This sequence belongs to the guanylate kinase family.

Its subcellular location is the cytoplasm. The catalysed reaction is GMP + ATP = GDP + ADP. Essential for recycling GMP and indirectly, cGMP. This Dehalococcoides mccartyi (strain ATCC BAA-2266 / KCTC 15142 / 195) (Dehalococcoides ethenogenes (strain 195)) protein is Guanylate kinase.